The following is a 388-amino-acid chain: Succinyl-diaminopimelate desuccinylase (388 aa).

H84 is a binding site for Zn(2+). D86 is an active-site residue. D115 is a Zn(2+) binding site. E146 functions as the Proton acceptor in the catalytic mechanism. Zn(2+) is bound by residues E147, E175, and H360.

The protein belongs to the peptidase M20A family. DapE subfamily. As to quaternary structure, homodimer. Zn(2+) is required as a cofactor. It depends on Co(2+) as a cofactor.

It catalyses the reaction N-succinyl-(2S,6S)-2,6-diaminopimelate + H2O = (2S,6S)-2,6-diaminopimelate + succinate. It participates in amino-acid biosynthesis; L-lysine biosynthesis via DAP pathway; LL-2,6-diaminopimelate from (S)-tetrahydrodipicolinate (succinylase route): step 3/3. Functionally, catalyzes the hydrolysis of N-succinyl-L,L-diaminopimelic acid (SDAP), forming succinate and LL-2,6-diaminopimelate (DAP), an intermediate involved in the bacterial biosynthesis of lysine and meso-diaminopimelic acid, an essential component of bacterial cell walls. The protein is Succinyl-diaminopimelate desuccinylase of Helicobacter pylori (strain G27).